The following is a 436-amino-acid chain: UPF0597 protein YhaM (436 aa).

It belongs to the UPF0597 family.

This is UPF0597 protein YhaM from Salmonella dublin (strain CT_02021853).